The sequence spans 77 residues: Large ribosomal subunit protein uL24 (77 aa).

The segment at 42-61 (KKHQKPSQTNANGGVVESEG) is disordered.

The protein belongs to the universal ribosomal protein uL24 family. In terms of assembly, part of the 50S ribosomal subunit.

One of two assembly initiator proteins, it binds directly to the 5'-end of the 23S rRNA, where it nucleates assembly of the 50S subunit. Functionally, one of the proteins that surrounds the polypeptide exit tunnel on the outside of the subunit. This is Large ribosomal subunit protein uL24 from Lactobacillus helveticus (strain DPC 4571).